The primary structure comprises 669 residues: DNA ligase (669 aa).

NAD(+) contacts are provided by residues 34 to 38, 83 to 84, and Glu113; these read DAEYD and SL. Residue Lys115 is the N6-AMP-lysine intermediate of the active site. NAD(+) is bound by residues Arg136, Glu170, Lys286, and Lys310. Residues Cys404, Cys407, Cys422, and Cys427 each contribute to the Zn(2+) site. One can recognise a BRCT domain in the interval 591 to 669; it reads IADSPFAGKT…EEALVKAISH (79 aa).

The protein belongs to the NAD-dependent DNA ligase family. LigA subfamily. Requires Mg(2+) as cofactor. It depends on Mn(2+) as a cofactor.

It carries out the reaction NAD(+) + (deoxyribonucleotide)n-3'-hydroxyl + 5'-phospho-(deoxyribonucleotide)m = (deoxyribonucleotide)n+m + AMP + beta-nicotinamide D-nucleotide.. In terms of biological role, DNA ligase that catalyzes the formation of phosphodiester linkages between 5'-phosphoryl and 3'-hydroxyl groups in double-stranded DNA using NAD as a coenzyme and as the energy source for the reaction. It is essential for DNA replication and repair of damaged DNA. This is DNA ligase from Halalkalibacterium halodurans (strain ATCC BAA-125 / DSM 18197 / FERM 7344 / JCM 9153 / C-125) (Bacillus halodurans).